A 193-amino-acid chain; its full sequence is Xanthine phosphoribosyltransferase (193 aa).

Residues L20 and N27 each contribute to the xanthine site. 5-phospho-alpha-D-ribose 1-diphosphate is bound at residue A129–A133. K157 contributes to the xanthine binding site.

The protein belongs to the purine/pyrimidine phosphoribosyltransferase family. Xpt subfamily. As to quaternary structure, homodimer.

It localises to the cytoplasm. The catalysed reaction is XMP + diphosphate = xanthine + 5-phospho-alpha-D-ribose 1-diphosphate. The protein operates within purine metabolism; XMP biosynthesis via salvage pathway; XMP from xanthine: step 1/1. In terms of biological role, converts the preformed base xanthine, a product of nucleic acid breakdown, to xanthosine 5'-monophosphate (XMP), so it can be reused for RNA or DNA synthesis. The sequence is that of Xanthine phosphoribosyltransferase from Bifidobacterium adolescentis (strain ATCC 15703 / DSM 20083 / NCTC 11814 / E194a).